We begin with the raw amino-acid sequence, 353 residues long: MLTLSDFDFPLPPELIAQSALPDRSASRLLVVERTAPEDTSEAVRLVDRAFSDILEYLNPDDLLVFNDTRVIKARFFGHKPSGGRIEVLVERVVDTHTVLAQVRASKTPVEGSLLHLADDAFAVTVGPRVDQFFTLRFPEPALDLIERYGRLPLPPYITHDPDAYDETRYQTVYARNPGAVAAPTAGLHFDDALFARLDAAGIRRAFLTLHVGAGTFQPVRTENLSEHKMHSEWYAISPELADAVRETRARGGRVIAVGTTSLRALESAAAEDGTLEAGSGDTDIFITPGYAFRIVDALITNFHLPKSTLLMLVSALAGVEAIRDAYRHAVDARYRFFSYGDAMLLTRRDRRA.

The protein belongs to the QueA family. In terms of assembly, monomer.

The protein localises to the cytoplasm. It catalyses the reaction 7-aminomethyl-7-carbaguanosine(34) in tRNA + S-adenosyl-L-methionine = epoxyqueuosine(34) in tRNA + adenine + L-methionine + 2 H(+). It participates in tRNA modification; tRNA-queuosine biosynthesis. In terms of biological role, transfers and isomerizes the ribose moiety from AdoMet to the 7-aminomethyl group of 7-deazaguanine (preQ1-tRNA) to give epoxyqueuosine (oQ-tRNA). The protein is S-adenosylmethionine:tRNA ribosyltransferase-isomerase of Cupriavidus metallidurans (strain ATCC 43123 / DSM 2839 / NBRC 102507 / CH34) (Ralstonia metallidurans).